The chain runs to 635 residues: Threonine--tRNA ligase (635 aa).

Positions 1 to 61 (MVSIRLPDGS…DHDVALAIVT (61 aa)) constitute a TGS domain. Positions 242–533 (DHRKLGKQLD…LIEHHAGAMP (292 aa)) are catalytic. The Zn(2+) site is built by Cys-333, His-384, and His-510.

The protein belongs to the class-II aminoacyl-tRNA synthetase family. In terms of assembly, homodimer. Zn(2+) serves as cofactor.

Its subcellular location is the cytoplasm. The catalysed reaction is tRNA(Thr) + L-threonine + ATP = L-threonyl-tRNA(Thr) + AMP + diphosphate + H(+). Functionally, catalyzes the attachment of threonine to tRNA(Thr) in a two-step reaction: L-threonine is first activated by ATP to form Thr-AMP and then transferred to the acceptor end of tRNA(Thr). Also edits incorrectly charged L-seryl-tRNA(Thr). The chain is Threonine--tRNA ligase from Paraburkholderia phytofirmans (strain DSM 17436 / LMG 22146 / PsJN) (Burkholderia phytofirmans).